Here is a 158-residue protein sequence, read N- to C-terminus: Protein Smg homolog (158 aa).

This sequence belongs to the Smg family.

The sequence is that of Protein Smg homolog from Shewanella oneidensis (strain ATCC 700550 / JCM 31522 / CIP 106686 / LMG 19005 / NCIMB 14063 / MR-1).